A 133-amino-acid chain; its full sequence is Protein archease (133 aa).

Ca(2+)-binding residues include Asp-11, Asp-132, and Leu-133.

The protein belongs to the archease family.

Functionally, activates the tRNA-splicing ligase complex by facilitating the enzymatic turnover of catalytic subunit RtcB. Acts by promoting the guanylylation of RtcB, a key intermediate step in tRNA ligation. Can also alter the NTP specificity of RtcB such that ATP, dGTP or ITP is used efficiently. This Thermoplasma volcanium (strain ATCC 51530 / DSM 4299 / JCM 9571 / NBRC 15438 / GSS1) protein is Protein archease.